Consider the following 118-residue polypeptide: Large ribosomal subunit protein bL19 (118 aa).

It belongs to the bacterial ribosomal protein bL19 family.

Its function is as follows. This protein is located at the 30S-50S ribosomal subunit interface and may play a role in the structure and function of the aminoacyl-tRNA binding site. In Aliarcobacter butzleri (strain RM4018) (Arcobacter butzleri), this protein is Large ribosomal subunit protein bL19.